We begin with the raw amino-acid sequence, 222 residues long: uncharacterized protein (222 aa).

4 consecutive transmembrane segments (helical) span residues 23–43 (FFAA…TGLL), 67–87 (IWVL…IGYL), 157–177 (IVGG…LGNV), and 187–207 (IILG…WHGY).

Belongs to the DedA family.

The protein localises to the cell membrane. This is an uncharacterized protein from Mycobacterium leprae (strain TN).